Consider the following 282-residue polypeptide: ATP phosphoribosyltransferase (282 aa).

Belongs to the ATP phosphoribosyltransferase family. Long subfamily. Mg(2+) serves as cofactor.

It is found in the cytoplasm. The enzyme catalyses 1-(5-phospho-beta-D-ribosyl)-ATP + diphosphate = 5-phospho-alpha-D-ribose 1-diphosphate + ATP. It functions in the pathway amino-acid biosynthesis; L-histidine biosynthesis; L-histidine from 5-phospho-alpha-D-ribose 1-diphosphate: step 1/9. Its activity is regulated as follows. Feedback inhibited by histidine. Its function is as follows. Catalyzes the condensation of ATP and 5-phosphoribose 1-diphosphate to form N'-(5'-phosphoribosyl)-ATP (PR-ATP). Has a crucial role in the pathway because the rate of histidine biosynthesis seems to be controlled primarily by regulation of HisG enzymatic activity. This is ATP phosphoribosyltransferase from Pyrobaculum islandicum (strain DSM 4184 / JCM 9189 / GEO3).